The sequence spans 122 residues: Crustacean hyperglycemic hormones 7 (122 aa).

An N-terminal signal peptide occupies residues 1–26 (MSLAMTAFRMMAVALVVVVASSTTWA). Disulfide bonds link Cys-55/Cys-91, Cys-71/Cys-87, and Cys-74/Cys-100. Val-120 is subject to Valine amide.

The protein belongs to the arthropod CHH/MIH/GIH/VIH hormone family. Produced by the medulla terminalis X-organ in the eyestalks and transported to the sinus gland where they are stored and released.

The protein localises to the secreted. Hormone found in the sinus gland of isopods and decapods which controls the blood sugar level. Has a secretagogue action over the amylase released from the midgut gland. May act as a stress hormone and may be involved in the control of molting and reproduction. This is Crustacean hyperglycemic hormones 7 from Penaeus japonicus (Kuruma prawn).